A 655-amino-acid polypeptide reads, in one-letter code: MGRWAWVPSPWPPPGLGPFLLLLLLLLLLPRGFQPQPGGNRTESPEPNATATPAIPTILVTSVTSETPATSAPEAEGPQSGGLPPPPRAVPSSSSPQAQALTEDGRPCRFPFRYGGRMLHACTSEGSAHRKWCATTHNYDRDRAWGYCVEATPPPGGPAALDPCASGPCLNGGSCSNTQDPQSYHCSCPRAFTGKDCGTEKCFDETRYEYLEGGDRWARVRQGHVEQCECFGGRTWCEGTRHTACLSSPCLNGGTCHLIVATGTTVCACPPGFAGRLCNIEPDERCFLGNGTGYRGVASTSASGLSCLAWNSDLLYQELHVDSVGAAALLGLGPHAYCRNPDNDERPWCYVVKDSALSWEYCRLEACESLTRVQLSPDLLATLPEPASPGRQACGRRHKKRTFLRPRIIGGSSSLPGSHPWLAAIYIGDSFCAGSLVHTCWVVSAAHCFSHSPPRDSVSVVLGQHFFNRTTDVTQTFGIEKYIPYTLYSVFNPSDHDLVLIRLKKKGDRCATRSQFVQPICLPEPGSTFPAGHKCQIAGWGHLDENVSGYSSSLREALVPLVADHKCSSPEVYGADISPNMLCAGYFDCKSDACQGDSGGPLACEKNGVAYLYGIISWGDGCGRLHKPGVYTRVANYVDWINDRIRPPRRLVAPS.

The signal sequence occupies residues 1 to 35; that stretch reads MGRWAWVPSPWPPPGLGPFLLLLLLLLLLPRGFQP. The propeptide at 36 to 372 is removed in mature form; it reads QPGGNRTESP…RLEACESLTR (337 aa). N-linked (GlcNAc...) asparagine glycans are attached at residues Asn-40 and Asn-48. Residues 64 to 102 form a disordered region; that stretch reads TSETPATSAPEAEGPQSGGLPPPPRAVPSSSSPQAQALT. The region spanning 103-150 is the Fibronectin type-II domain; sequence EDGRPCRFPFRYGGRMLHACTSEGSAHRKWCATTHNYDRDRAWGYCVE. Disulfide bonds link Cys-108–Cys-133, Cys-122–Cys-148, Cys-164–Cys-175, Cys-169–Cys-186, Cys-188–Cys-197, Cys-202–Cys-230, Cys-228–Cys-237, Cys-245–Cys-256, Cys-250–Cys-267, Cys-269–Cys-278, Cys-286–Cys-367, Cys-307–Cys-349, Cys-338–Cys-362, Cys-394–Cys-521, Cys-432–Cys-448, Cys-440–Cys-510, Cys-535–Cys-604, Cys-567–Cys-583, and Cys-594–Cys-622. The EGF-like 1 domain maps to 160-198; the sequence is ALDPCASGPCLNGGSCSNTQDPQSYHCSCPRAFTGKDCG. Residues 200–240 form the Fibronectin type-I domain; that stretch reads EKCFDETRYEYLEGGDRWARVRQGHVEQCECFGGRTWCEGT. One can recognise an EGF-like 2 domain in the interval 241 to 279; that stretch reads RHTACLSSPCLNGGTCHLIVATGTTVCACPPGFAGRLCN. In terms of domain architecture, Kringle spans 286 to 367; sequence CFLGNGTGYR…SWEYCRLEAC (82 aa). Asn-290 carries an N-linked (GlcNAc...) asparagine glycan. Positions 408–646 constitute a Peptidase S1 domain; it reads IIGGSSSLPG…YVDWINDRIR (239 aa). The active-site Charge relay system is the His-447. N-linked (GlcNAc...) asparagine glycosylation is found at Asn-468 and Asn-492. The active-site Charge relay system is Asp-497. An N-linked (GlcNAc...) asparagine glycan is attached at Asn-546. Catalysis depends on Ser-598, which acts as the Charge relay system.

This sequence belongs to the peptidase S1 family. As to quaternary structure, heterodimer of a short chain and a long chain linked by a disulfide bond. In terms of processing, the active form of HGFAC presents in the serum is derived from the COOH-terminal region of the precursor by the cleavage of bonds between Arg-372 and Val-373 and Arg-407 and Ile-408. Liver.

Its subcellular location is the secreted. Serine protease that hydrolyzes the inactive zymogen hepatocyte growth factor (HGFsc) to an activated disulfide-linked heterodimer, then initiating hepatocyte growth factor receptor signaling pathway. The protein is Hepatocyte growth factor activator serine protease of Homo sapiens (Human).